The following is a 223-amino-acid chain: Adenylate kinase (223 aa).

Residue 10-15 (GSGKGT) participates in ATP binding. Positions 30-59 (ESGAIFREHIGGGTELGKKAKAYIDRGDLV) are NMP. AMP contacts are provided by residues S31, R36, 57-59 (DLV), 84-87 (GFPR), and Q91. Positions 125–164 (GRRLCKNNNNHPNNIFIEAIKPNGDVCRVCGGTLSSRSDD) are LID. R126 contacts ATP. Residues R161 and R173 each contribute to the AMP site. Residue G209 participates in ATP binding.

This sequence belongs to the adenylate kinase family. As to quaternary structure, monomer.

It localises to the cytoplasm. The enzyme catalyses AMP + ATP = 2 ADP. Its pathway is purine metabolism; AMP biosynthesis via salvage pathway; AMP from ADP: step 1/1. Functionally, catalyzes the reversible transfer of the terminal phosphate group between ATP and AMP. Plays an important role in cellular energy homeostasis and in adenine nucleotide metabolism. The chain is Adenylate kinase from Desulfovibrio desulfuricans (strain ATCC 27774 / DSM 6949 / MB).